The primary structure comprises 393 residues: MITYEKKYLMDTYNRYPIMLVKGEGTRVWDSEGNAYLDFVAGIAVNSLGHCHPALVEAIKKQAETLIHCSNLYWNEKQIELARMISENSFGGKVFFANSGAEANEGAIKLARKYASLKYGGKRYKIITAKNSFHGRTFGALTATGQEKYHKGFGPLLAGFKYVPLNDIEALYEAVDDEVCAIMLEVIQGEGGIHEATPEYVKAVRKICDENDLLFILDEVQTGIGRTGKLFGYEHYGVVPDIMTLAKGLGGGFPIGAIVAKEDKAVFKPGDHASTFGGNPLACAAGIAVLNEVTKDGFLEGVDKKGKYFREGLETLQKKHKVVKEIRGKGLMVGCEVDLEDASEIVLKALEKGLLINSVSHNVLRFVPPLIVTEEEIDEALQILDDVLSEIRF.

Pyridoxal 5'-phosphate is bound by residues 100 to 101 (GA) and phenylalanine 133. Arginine 136 contacts N(2)-acetyl-L-ornithine. Residue 218-221 (DEVQ) participates in pyridoxal 5'-phosphate binding. Lysine 247 is subject to N6-(pyridoxal phosphate)lysine. N(2)-acetyl-L-ornithine is bound at residue serine 274. A pyridoxal 5'-phosphate-binding site is contributed by threonine 275.

This sequence belongs to the class-III pyridoxal-phosphate-dependent aminotransferase family. ArgD subfamily. In terms of assembly, homodimer. Requires pyridoxal 5'-phosphate as cofactor.

The protein resides in the cytoplasm. The catalysed reaction is N(2)-acetyl-L-ornithine + 2-oxoglutarate = N-acetyl-L-glutamate 5-semialdehyde + L-glutamate. It participates in amino-acid biosynthesis; L-arginine biosynthesis; N(2)-acetyl-L-ornithine from L-glutamate: step 4/4. The sequence is that of Acetylornithine aminotransferase from Caldanaerobacter subterraneus subsp. tengcongensis (strain DSM 15242 / JCM 11007 / NBRC 100824 / MB4) (Thermoanaerobacter tengcongensis).